Here is a 344-residue protein sequence, read N- to C-terminus: tRNA N6-adenosine threonylcarbamoyltransferase (344 aa).

Residues His-119 and His-123 each coordinate Fe cation. Substrate contacts are provided by residues Val-141 to Gly-145, Asp-174, Gly-187, Asp-191, and Asn-280. Asp-310 serves as a coordination point for Fe cation.

It belongs to the KAE1 / TsaD family. Fe(2+) is required as a cofactor.

It is found in the cytoplasm. It carries out the reaction L-threonylcarbamoyladenylate + adenosine(37) in tRNA = N(6)-L-threonylcarbamoyladenosine(37) in tRNA + AMP + H(+). Its function is as follows. Required for the formation of a threonylcarbamoyl group on adenosine at position 37 (t(6)A37) in tRNAs that read codons beginning with adenine. Is involved in the transfer of the threonylcarbamoyl moiety of threonylcarbamoyl-AMP (TC-AMP) to the N6 group of A37, together with TsaE and TsaB. TsaD likely plays a direct catalytic role in this reaction. The chain is tRNA N6-adenosine threonylcarbamoyltransferase from Listeria welshimeri serovar 6b (strain ATCC 35897 / DSM 20650 / CCUG 15529 / CIP 8149 / NCTC 11857 / SLCC 5334 / V8).